Consider the following 686-residue polypeptide: DNA ligase (686 aa).

Residues 45 to 49 (DNEYD), 94 to 95 (SL), and Glu-127 contribute to the NAD(+) site. Lys-129 serves as the catalytic N6-AMP-lysine intermediate. NAD(+)-binding residues include Arg-150, Glu-187, Lys-302, and Lys-326. Residues Cys-420, Cys-423, Cys-438, and Cys-444 each coordinate Zn(2+). Residues 605–686 (LDNLPLEGQT…DEFLKMIGAS (82 aa)) form the BRCT domain.

The protein belongs to the NAD-dependent DNA ligase family. LigA subfamily. Mg(2+) is required as a cofactor. Mn(2+) serves as cofactor.

It carries out the reaction NAD(+) + (deoxyribonucleotide)n-3'-hydroxyl + 5'-phospho-(deoxyribonucleotide)m = (deoxyribonucleotide)n+m + AMP + beta-nicotinamide D-nucleotide.. Its function is as follows. DNA ligase that catalyzes the formation of phosphodiester linkages between 5'-phosphoryl and 3'-hydroxyl groups in double-stranded DNA using NAD as a coenzyme and as the energy source for the reaction. It is essential for DNA replication and repair of damaged DNA. This Psychrobacter sp. (strain PRwf-1) protein is DNA ligase.